Reading from the N-terminus, the 150-residue chain is MLGAALRRCAVAATTRAGPRGLLHSARTPGPAAAIQSVRCXSHGSQETDEEFDARWVTYFNKPDIDAWELRKGINTLVTYDMVPEPKIIDAALRACRRLNDFASTVRILEAVKDKAGPHKEIYPYVIQELRPTLNELGISTPEELGLDKV.

The N-terminal 41 residues, 1-41, are a transit peptide targeting the mitochondrion; the sequence is MLGAALRRCAVAATTRAGPRGLLHSARTPGPAAAIQSVRCX. The short motif at 2-17 is the SIFI-degron element; sequence LGAALRRCAVAATTRA. Residues K87 and K113 each carry the N6-acetyllysine modification. Phosphothreonine is present on T141.

Belongs to the cytochrome c oxidase subunit 5A family. Component of the cytochrome c oxidase (complex IV, CIV), a multisubunit enzyme composed of 14 subunits. The complex is composed of a catalytic core of 3 subunits MT-CO1, MT-CO2 and MT-CO3, encoded in the mitochondrial DNA, and 11 supernumerary subunits COX4I, COX5A, COX5B, COX6A, COX6B, COX6C, COX7A, COX7B, COX7C, COX8 and NDUFA4, which are encoded in the nuclear genome. The complex exists as a monomer or a dimer and forms supercomplexes (SCs) in the inner mitochondrial membrane with NADH-ubiquinone oxidoreductase (complex I, CI) and ubiquinol-cytochrome c oxidoreductase (cytochrome b-c1 complex, complex III, CIII), resulting in different assemblies (supercomplex SCI(1)III(2)IV(1) and megacomplex MCI(2)III(2)IV(2)). Interacts with AFG1L. Interacts with RAB5IF. In terms of processing, in response to mitochondrial stress, the precursor protein is ubiquitinated by the SIFI complex in the cytoplasm before mitochondrial import, leading to its degradation. Within the SIFI complex, UBR4 initiates ubiquitin chain that are further elongated or branched by KCMF1.

It localises to the mitochondrion inner membrane. It participates in energy metabolism; oxidative phosphorylation. Functionally, component of the cytochrome c oxidase, the last enzyme in the mitochondrial electron transport chain which drives oxidative phosphorylation. The respiratory chain contains 3 multisubunit complexes succinate dehydrogenase (complex II, CII), ubiquinol-cytochrome c oxidoreductase (cytochrome b-c1 complex, complex III, CIII) and cytochrome c oxidase (complex IV, CIV), that cooperate to transfer electrons derived from NADH and succinate to molecular oxygen, creating an electrochemical gradient over the inner membrane that drives transmembrane transport and the ATP synthase. Cytochrome c oxidase is the component of the respiratory chain that catalyzes the reduction of oxygen to water. Electrons originating from reduced cytochrome c in the intermembrane space (IMS) are transferred via the dinuclear copper A center (CU(A)) of subunit 2 and heme A of subunit 1 to the active site in subunit 1, a binuclear center (BNC) formed by heme A3 and copper B (CU(B)). The BNC reduces molecular oxygen to 2 water molecules using 4 electrons from cytochrome c in the IMS and 4 protons from the mitochondrial matrix. The sequence is that of Cytochrome c oxidase subunit 5A, mitochondrial (COX5A) from Pan paniscus (Pygmy chimpanzee).